The primary structure comprises 216 residues: Somatotropin (216 aa).

The first 26 residues, 1 to 26 (MATGSQTSWLLTFTLLCLPWPQEAGA), serve as a signal peptide directing secretion. His45 lines the Zn(2+) pocket. The cysteines at positions 78 and 189 are disulfide-linked. Residue Ser131 is modified to Phosphoserine. Glu198 contacts Zn(2+). An intrachain disulfide couples Cys206 to Cys214.

It belongs to the somatotropin/prolactin family.

Its subcellular location is the secreted. Functionally, plays an important role in growth control. Its major role in stimulating body growth is to stimulate the liver and other tissues to secrete IGF1. It stimulates both the differentiation and proliferation of myoblasts. It also stimulates amino acid uptake and protein synthesis in muscle and other tissues. This Spalax ehrenbergi (Middle East blind mole rat) protein is Somatotropin (GH1).